We begin with the raw amino-acid sequence, 521 residues long: Apolipoprotein N-acyltransferase (521 aa).

The next 5 helical transmembrane spans lie at 24–44 (IKETGYSILGFVAYVPLFIAL), 71–91 (WLGFFHAFGWITFIGVIIGYI), 128–148 (IGFLAYPWGLAAFTVNNFNNL), 151–171 (IADIFGVFFVSFAVYFLNSGI), and 182–202 (NLLNIAFPTLLITASFTYGMI). Positions 218 to 472 (LNIAAIQLNT…KGYLLSTVKL (255 aa)) constitute a CN hydrolase domain. The active-site Proton acceptor is the glutamate 263. Lysine 331 is an active-site residue. Residue cysteine 383 is the Nucleophile of the active site.

The protein belongs to the CN hydrolase family. Apolipoprotein N-acyltransferase subfamily.

The protein localises to the cell inner membrane. It carries out the reaction N-terminal S-1,2-diacyl-sn-glyceryl-L-cysteinyl-[lipoprotein] + a glycerophospholipid = N-acyl-S-1,2-diacyl-sn-glyceryl-L-cysteinyl-[lipoprotein] + a 2-acyl-sn-glycero-3-phospholipid + H(+). Its pathway is protein modification; lipoprotein biosynthesis (N-acyl transfer). Functionally, catalyzes the phospholipid dependent N-acylation of the N-terminal cysteine of apolipoprotein, the last step in lipoprotein maturation. This is Apolipoprotein N-acyltransferase from Borreliella burgdorferi (strain ATCC 35210 / DSM 4680 / CIP 102532 / B31) (Borrelia burgdorferi).